Consider the following 179-residue polypeptide: Large ribosomal subunit protein uL5 (179 aa).

It belongs to the universal ribosomal protein uL5 family. In terms of assembly, part of the 50S ribosomal subunit; part of the 5S rRNA/L5/L18/L25 subcomplex. Contacts the 5S rRNA and the P site tRNA. Forms a bridge to the 30S subunit in the 70S ribosome.

This is one of the proteins that bind and probably mediate the attachment of the 5S RNA into the large ribosomal subunit, where it forms part of the central protuberance. In the 70S ribosome it contacts protein S13 of the 30S subunit (bridge B1b), connecting the 2 subunits; this bridge is implicated in subunit movement. Contacts the P site tRNA; the 5S rRNA and some of its associated proteins might help stabilize positioning of ribosome-bound tRNAs. The polypeptide is Large ribosomal subunit protein uL5 (Dehalococcoides mccartyi (strain ATCC BAA-2100 / JCM 16839 / KCTC 5957 / BAV1)).